A 392-amino-acid chain; its full sequence is Succinate--CoA ligase [ADP-forming] subunit beta (392 aa).

In terms of domain architecture, ATP-grasp spans 9 to 247 (KEILRVCGVP…LYEEDPKEIE (239 aa)). ATP is bound by residues Lys-49, 56 to 58 (GRG), Glu-102, Gln-105, and Glu-110. Mg(2+) is bound by residues Asn-202 and Asp-216. Substrate-binding positions include Asn-267 and 324-326 (GIM).

This sequence belongs to the succinate/malate CoA ligase beta subunit family. In terms of assembly, heterotetramer of two alpha and two beta subunits. Requires Mg(2+) as cofactor.

The enzyme catalyses succinate + ATP + CoA = succinyl-CoA + ADP + phosphate. It carries out the reaction GTP + succinate + CoA = succinyl-CoA + GDP + phosphate. The protein operates within carbohydrate metabolism; tricarboxylic acid cycle; succinate from succinyl-CoA (ligase route): step 1/1. In terms of biological role, succinyl-CoA synthetase functions in the citric acid cycle (TCA), coupling the hydrolysis of succinyl-CoA to the synthesis of either ATP or GTP and thus represents the only step of substrate-level phosphorylation in the TCA. The beta subunit provides nucleotide specificity of the enzyme and binds the substrate succinate, while the binding sites for coenzyme A and phosphate are found in the alpha subunit. In Neorickettsia sennetsu (strain ATCC VR-367 / Miyayama) (Ehrlichia sennetsu), this protein is Succinate--CoA ligase [ADP-forming] subunit beta.